A 175-amino-acid chain; its full sequence is Translation initiation factor IF-3 (175 aa).

It belongs to the IF-3 family. As to quaternary structure, monomer.

Its subcellular location is the cytoplasm. IF-3 binds to the 30S ribosomal subunit and shifts the equilibrium between 70S ribosomes and their 50S and 30S subunits in favor of the free subunits, thus enhancing the availability of 30S subunits on which protein synthesis initiation begins. The sequence is that of Translation initiation factor IF-3 from Aquifex aeolicus (strain VF5).